The sequence spans 578 residues: Phosphoenolpyruvate-protein phosphotransferase (578 aa).

H195 functions as the Tele-phosphohistidine intermediate in the catalytic mechanism. Phosphoenolpyruvate is bound by residues R302 and R338. Mg(2+)-binding residues include E437 and D461. Phosphoenolpyruvate is bound by residues 460–461 (ND) and R471. Catalysis depends on C508, which acts as the Proton donor.

This sequence belongs to the PEP-utilizing enzyme family. Homodimer. Mg(2+) serves as cofactor.

The protein resides in the cytoplasm. It carries out the reaction L-histidyl-[protein] + phosphoenolpyruvate = N(pros)-phospho-L-histidyl-[protein] + pyruvate. Its function is as follows. General (non sugar-specific) component of the phosphoenolpyruvate-dependent sugar phosphotransferase system (sugar PTS). This major carbohydrate active-transport system catalyzes the phosphorylation of incoming sugar substrates concomitantly with their translocation across the cell membrane. Enzyme I transfers the phosphoryl group from phosphoenolpyruvate (PEP) to the phosphoryl carrier protein (HPr). The protein is Phosphoenolpyruvate-protein phosphotransferase (ptsI) of Bacillus sp. (strain S).